Reading from the N-terminus, the 134-residue chain is Large ribosomal subunit protein uL22 (134 aa).

It belongs to the universal ribosomal protein uL22 family. In terms of assembly, part of the 50S ribosomal subunit.

Functionally, this protein binds specifically to 23S rRNA; its binding is stimulated by other ribosomal proteins, e.g. L4, L17, and L20. It is important during the early stages of 50S assembly. It makes multiple contacts with different domains of the 23S rRNA in the assembled 50S subunit and ribosome. The globular domain of the protein is located near the polypeptide exit tunnel on the outside of the subunit, while an extended beta-hairpin is found that lines the wall of the exit tunnel in the center of the 70S ribosome. The chain is Large ribosomal subunit protein uL22 from Gluconacetobacter diazotrophicus (strain ATCC 49037 / DSM 5601 / CCUG 37298 / CIP 103539 / LMG 7603 / PAl5).